We begin with the raw amino-acid sequence, 655 residues long: Sphingomyelin phosphodiesterase 3 (655 aa).

The Cytoplasmic portion of the chain corresponds to 1–10 (MVLYTTPFPN). The helical intramembrane region spans 11–31 (SCLSALHAVSWALIFPCYWLV). Over 32–64 (DRLLASFIPTTYEKRQRADDPCCLQLFCTVLFT) the chain is Cytoplasmic. 3 S-palmitoyl cysteine lipidation sites follow: Cys-53, Cys-54, and Cys-59. The helical intramembrane region spans 65 to 85 (PVYLALLVAALPFAFLGFIFW). The Cytoplasmic portion of the chain corresponds to 86–655 (SPLQSARRPY…LMVSAGEEEA (570 aa)). Phosphoserine is present on Ser-178. The interval 209–318 (VEYKGDGGRH…SGGSGEPGAN (110 aa)) is disordered. 2 stretches are compositionally biased toward basic and acidic residues: residues 211–221 (YKGDGGRHPSD) and 246–255 (GGEEGGRPQE). Ser-289 is subject to Phosphoserine. Position 362 (Glu-362) interacts with Mg(2+). Residues Cys-395 and Cys-396 are each lipidated (S-palmitoyl cysteine). Catalysis depends on His-639, which acts as the Proton acceptor.

It belongs to the neutral sphingomyelinase family. Mg(2+) is required as a cofactor. Post-translationally, palmitoylated, palmitoylation-deficient proteins are targeted for lysosomal degradation. As to expression, predominantly expressed in brain (at protein level).

Its subcellular location is the golgi apparatus membrane. The protein localises to the cell membrane. The enzyme catalyses a sphingomyelin + H2O = phosphocholine + an N-acylsphing-4-enine + H(+). It catalyses the reaction N-(15Z-tetracosenoyl)sphing-4-enine-1-phosphocholine + H2O = N-(15Z-tetracosenoyl)-sphing-4-enine + phosphocholine + H(+). It carries out the reaction N-(tetracosanoyl)-sphing-4-enine-1-phosphocholine + H2O = N-tetracosanoyl-sphing-4-enine + phosphocholine + H(+). The catalysed reaction is N-(hexadecanoyl)-sphing-4-enine-1-phosphocholine + H2O = N-hexadecanoylsphing-4-enine + phosphocholine + H(+). The enzyme catalyses an N-(acyl)-sphingosylphosphocholine + H2O = an N-acyl-sphingoid base + phosphocholine + H(+). It catalyses the reaction 1-hexadecanoyl-sn-glycero-3-phosphocholine + H2O = 1-hexadecanoyl-sn-glycerol + phosphocholine + H(+). It carries out the reaction 1-O-octadecyl-sn-glycero-3-phosphocholine + H2O = 1-O-octadecyl-sn-glycerol + phosphocholine + H(+). The catalysed reaction is a sphingosylphosphocholine + H2O = a sphingoid base + phosphocholine + H(+). It functions in the pathway lipid metabolism; sphingolipid metabolism. Its activity is regulated as follows. Inhibited by nSMase inhibitor GW4869. Binding of anionic phospholipids (APLs) such as phosphatidylserine (PS) and phosphatidic acid (PA) increases enzymatic activity. Functionally, catalyzes the hydrolysis of sphingomyelin to form ceramide and phosphocholine. Ceramide mediates numerous cellular functions, such as apoptosis and growth arrest, and is capable of regulating these 2 cellular events independently. Also hydrolyzes sphingosylphosphocholine. Regulates the cell cycle by acting as a growth suppressor in confluent cells. Probably acts as a regulator of postnatal development and participates in bone and dentin mineralization. Binds to anionic phospholipids (APLs) such as phosphatidylserine (PS) and phosphatidic acid (PA) that modulate enzymatic activity and subcellular location. May be involved in IL-1-beta-induced JNK activation in hepatocytes. May act as a mediator in transcriptional regulation of NOS2/iNOS via the NF-kappa-B activation under inflammatory conditions. In Mus musculus (Mouse), this protein is Sphingomyelin phosphodiesterase 3.